The primary structure comprises 399 residues: MDPPSLMSDGSSWSKLPLDLLIMVFERLGFVDFQRTKSVCLAWLYASRMSAPNKQIPWLIMFPEKGKDFCLLFNSEEKEKIYRIQNLGVEFANSHCLAIYGSWLFMRDPRYKLYIMNLFTRERINLPSVESQFGRIKIEQINDDLFYRKVDDEYDYHPKRHMIDISDHILWIDDKTKDYVVMWSFECGYTYMVYCRTGDNIWNYRSLDISTVNIVYKDHKMYLYSYTRDVKVLDFCEDIPRQIFETQVNYDILMEKGFRSDVDDVLNDKKEHLVVTLNGDVLRVKSKIWDNSDVWSFCIYKLNSSNTYWEKLTSLGDEAILLDLGITVLANTIEGINRNSIYFSGYHRPHYFRFDHVWSEKDICVFNLDTQEVERPHQSICSSIQISGARWFVPNFKHI.

The F-box domain occupies 12–48 (SWSKLPLDLLIMVFERLGFVDFQRTKSVCLAWLYASR).

The sequence is that of Probable F-box protein At4g22060 from Arabidopsis thaliana (Mouse-ear cress).